We begin with the raw amino-acid sequence, 116 residues long: Large ribosomal subunit protein bL19 (116 aa).

This sequence belongs to the bacterial ribosomal protein bL19 family.

Its function is as follows. This protein is located at the 30S-50S ribosomal subunit interface and may play a role in the structure and function of the aminoacyl-tRNA binding site. This chain is Large ribosomal subunit protein bL19, found in Pseudomonas putida (strain W619).